Consider the following 92-residue polypeptide: UPF0250 protein XCC3453 (92 aa).

It belongs to the UPF0250 family.

The protein is UPF0250 protein XCC3453 of Xanthomonas campestris pv. campestris (strain ATCC 33913 / DSM 3586 / NCPPB 528 / LMG 568 / P 25).